The chain runs to 466 residues: Uronate isomerase (466 aa).

Belongs to the metallo-dependent hydrolases superfamily. Uronate isomerase family.

It carries out the reaction D-glucuronate = D-fructuronate. It catalyses the reaction aldehydo-D-galacturonate = keto-D-tagaturonate. Its pathway is carbohydrate metabolism; pentose and glucuronate interconversion. The chain is Uronate isomerase from Streptococcus pneumoniae (strain 70585).